The following is a 175-amino-acid chain: Gamma-crystallin B (175 aa).

Beta/gamma crystallin 'Greek key' domains follow at residues 2-40 (GKIT…RVES) and 41-83 (GCWM…HLIP). Residues 84–88 (PHSGT) form a connecting peptide region. Beta/gamma crystallin 'Greek key' domains are found at residues 89 to 129 (YRMK…NVLE) and 130 to 172 (GSWI…RRVM).

Belongs to the beta/gamma-crystallin family. As to quaternary structure, monomer.

In terms of biological role, crystallins are the dominant structural components of the vertebrate eye lens. The sequence is that of Gamma-crystallin B (CRYGB) from Macaca mulatta (Rhesus macaque).